The chain runs to 476 residues: Glucose-1-phosphate adenylyltransferase (476 aa).

Alpha-D-glucose 1-phosphate is bound by residues Tyr114, Gly179, Glu194–Lys195, and Ser212.

Belongs to the bacterial/plant glucose-1-phosphate adenylyltransferase family. In terms of assembly, homotetramer.

The enzyme catalyses alpha-D-glucose 1-phosphate + ATP + H(+) = ADP-alpha-D-glucose + diphosphate. Its pathway is glycan biosynthesis; glycogen biosynthesis. Its function is as follows. Involved in the biosynthesis of ADP-glucose, a building block required for the elongation reactions to produce glycogen. Catalyzes the reaction between ATP and alpha-D-glucose 1-phosphate (G1P) to produce pyrophosphate and ADP-Glc. The protein is Glucose-1-phosphate adenylyltransferase of Yersinia pestis bv. Antiqua (strain Antiqua).